The primary structure comprises 1592 residues: Autophagy-related protein 2 (1592 aa).

Residues 2-21 (AFWLPQNIQKRLLLYVLQQI) are ER-targeting domain. S236 bears the Phosphoserine mark. Phosphoserine; by ATG1 is present on S249. The disordered stretch occupies residues 264–286 (AMEEQSNEDPSEPQVTQEEQEND). Residues 1049 to 1075 (TRKFIANTVEKLDKELSKAEASSSKSN) are a coiled coil. S1086 carries the phosphoserine; by ATG1 modification. A PAS-targeting domain region spans residues 1347-1373 (APVRSFMAIGSGVKTLVTVLMSEYRQE).

The protein belongs to the ATG2 family. Interacts with ATG18. Interacts with ATG9.

Its subcellular location is the preautophagosomal structure membrane. The protein resides in the endoplasmic reticulum membrane. It carries out the reaction a 1,2-diacyl-sn-glycero-3-phosphocholine(in) = a 1,2-diacyl-sn-glycero-3-phosphocholine(out). The catalysed reaction is a 1,2-diacyl-sn-glycero-3-phospho-L-serine(in) = a 1,2-diacyl-sn-glycero-3-phospho-L-serine(out). It catalyses the reaction a 1,2-diacyl-sn-glycero-3-phosphoethanolamine(in) = a 1,2-diacyl-sn-glycero-3-phosphoethanolamine(out). Functionally, lipid transfer protein required for autophagosome completion and peroxisome degradation. Tethers the edge of the isolation membrane (IM) to the endoplasmic reticulum (ER) and mediates direct lipid transfer from ER to IM for IM expansion. ATG2 binds to the ER exit site (ERES), which is the membrane source for autophagosome formation, using basic residues in its N-terminal region (NR) and to the expanding edge of the IM through its C-terminal region. The latter binding is assisted by an ATG18-PtdIns3P interaction. ATG2 then extracts phospholipids from the membrane source using its NR and transfers them to ATG9 to the IM through its predicted beta-sheet-rich structure for membrane expansion. ATG2 is also involved in the recruitment of lipids to a restricted region close to the vacuole, termed the vacuole-isolation membrane contact site (VICS), which is also essential for autophagosome formation. Necessary for the localization of ATG18 to the preautophagosomal structure (PAS) and the binding of ATG18 to ATG9. ATG2 is the most downstream ATG protein in the preautophagosomal structure organization process. Involved in correct ATG9 trafficking through the preautophagosomal structure and in peroxisome degradation. Plays a significant role in life span extension. The protein is Autophagy-related protein 2 (ATG2) of Saccharomyces cerevisiae (strain ATCC 204508 / S288c) (Baker's yeast).